The chain runs to 186 residues: Peptidyl-tRNA hydrolase (186 aa).

Position 13 (tyrosine 13) interacts with tRNA. Residue histidine 18 is the Proton acceptor of the active site. The tRNA site is built by tyrosine 59, asparagine 61, and asparagine 107.

The protein belongs to the PTH family. In terms of assembly, monomer.

It localises to the cytoplasm. The catalysed reaction is an N-acyl-L-alpha-aminoacyl-tRNA + H2O = an N-acyl-L-amino acid + a tRNA + H(+). Functionally, hydrolyzes ribosome-free peptidyl-tRNAs (with 1 or more amino acids incorporated), which drop off the ribosome during protein synthesis, or as a result of ribosome stalling. Its function is as follows. Catalyzes the release of premature peptidyl moieties from peptidyl-tRNA molecules trapped in stalled 50S ribosomal subunits, and thus maintains levels of free tRNAs and 50S ribosomes. This chain is Peptidyl-tRNA hydrolase, found in Thermotoga sp. (strain RQ2).